Here is a 671-residue protein sequence, read N- to C-terminus: DNA ligase (671 aa).

NAD(+) contacts are provided by residues 34 to 38, 83 to 84, and Glu-117; these read DAEYD and SL. The active-site N6-AMP-lysine intermediate is Lys-119. NAD(+) contacts are provided by Arg-140, Glu-177, Lys-293, and Lys-317. Residues Cys-411, Cys-414, Cys-429, and Cys-434 each contribute to the Zn(2+) site. Positions 591–671 constitute a BRCT domain; that stretch reads KVGGKFTGKT…EFLQMLEGEQ (81 aa).

This sequence belongs to the NAD-dependent DNA ligase family. LigA subfamily. The cofactor is Mg(2+). Mn(2+) is required as a cofactor.

The enzyme catalyses NAD(+) + (deoxyribonucleotide)n-3'-hydroxyl + 5'-phospho-(deoxyribonucleotide)m = (deoxyribonucleotide)n+m + AMP + beta-nicotinamide D-nucleotide.. Its function is as follows. DNA ligase that catalyzes the formation of phosphodiester linkages between 5'-phosphoryl and 3'-hydroxyl groups in double-stranded DNA using NAD as a coenzyme and as the energy source for the reaction. It is essential for DNA replication and repair of damaged DNA. The polypeptide is DNA ligase (Geobacter metallireducens (strain ATCC 53774 / DSM 7210 / GS-15)).